The sequence spans 169 residues: Phosphopantetheine adenylyltransferase (169 aa).

Ser10 lines the substrate pocket. Residues 10 to 11 (SF) and His18 each bind ATP. Positions 42, 79, and 93 each coordinate substrate. ATP is bound by residues 94 to 96 (GLR), Glu104, and 129 to 135 (VRPITAT).

The protein belongs to the bacterial CoaD family. In terms of assembly, homohexamer. The cofactor is Mg(2+).

It localises to the cytoplasm. The enzyme catalyses (R)-4'-phosphopantetheine + ATP + H(+) = 3'-dephospho-CoA + diphosphate. The protein operates within cofactor biosynthesis; coenzyme A biosynthesis; CoA from (R)-pantothenate: step 4/5. Functionally, reversibly transfers an adenylyl group from ATP to 4'-phosphopantetheine, yielding dephospho-CoA (dPCoA) and pyrophosphate. This chain is Phosphopantetheine adenylyltransferase, found in Rhodopseudomonas palustris (strain ATCC BAA-98 / CGA009).